The sequence spans 345 residues: S-adenosylmethionine:tRNA ribosyltransferase-isomerase (345 aa).

Belongs to the QueA family. In terms of assembly, monomer.

It is found in the cytoplasm. The enzyme catalyses 7-aminomethyl-7-carbaguanosine(34) in tRNA + S-adenosyl-L-methionine = epoxyqueuosine(34) in tRNA + adenine + L-methionine + 2 H(+). The protein operates within tRNA modification; tRNA-queuosine biosynthesis. In terms of biological role, transfers and isomerizes the ribose moiety from AdoMet to the 7-aminomethyl group of 7-deazaguanine (preQ1-tRNA) to give epoxyqueuosine (oQ-tRNA). In Finegoldia magna (strain ATCC 29328 / DSM 20472 / WAL 2508) (Peptostreptococcus magnus), this protein is S-adenosylmethionine:tRNA ribosyltransferase-isomerase.